The chain runs to 216 residues: Ethylene-responsive transcription factor ERF016 (216 aa).

The AP2/ERF DNA-binding region spans Lys-6–Pro-63. Residues Glu-121–Asn-145 are disordered. The segment covering Gly-135–Asn-145 has biased composition (low complexity).

The protein belongs to the AP2/ERF transcription factor family. ERF subfamily.

It localises to the nucleus. In terms of biological role, probably acts as a transcriptional activator. Binds to the GCC-box pathogenesis-related promoter element. May be involved in the regulation of gene expression by stress factors and by components of stress signal transduction pathways. This is Ethylene-responsive transcription factor ERF016 (ERF016) from Arabidopsis thaliana (Mouse-ear cress).